The sequence spans 120 residues: Glycine cleavage system H protein (120 aa).

The region spanning 17 to 99 (VATVGITEHA…QGAAWFFKLK (83 aa)) is the Lipoyl-binding domain. Lys58 carries the post-translational modification N6-lipoyllysine.

The protein belongs to the GcvH family. As to quaternary structure, the glycine cleavage system is composed of four proteins: P, T, L and H. It depends on (R)-lipoate as a cofactor.

The glycine cleavage system catalyzes the degradation of glycine. The H protein shuttles the methylamine group of glycine from the P protein to the T protein. The sequence is that of Glycine cleavage system H protein from Sinorhizobium medicae (strain WSM419) (Ensifer medicae).